Here is a 356-residue protein sequence, read N- to C-terminus: Caspase activity and apoptosis inhibitor 1 (356 aa).

A compositionally biased stretch (basic residues) spans 1–14 (MTGKKSSREKRRKR). Disordered regions lie at residues 1–24 (MTGK…ASLA) and 54–80 (VAGG…GSLQ). S68 carries the phosphoserine modification. T69 is modified (phosphothreonine). A Glycyl lysine isopeptide (Lys-Gly) (interchain with G-Cter in SUMO2) cross-link involves residue K84. S100 and S183 each carry phosphoserine. Positions 208–234 (DSTSSLRENKQPEVLESKQGKGEDSDV) are disordered. Residues 214–231 (RENKQPEVLESKQGKGED) are compositionally biased toward basic and acidic residues. Positions 276–306 (ENTVQSEAGQIDDLERDIEKSVNEILGLAES) form a coiled coil. S307 bears the Phosphoserine mark.

In terms of biological role, anti-apoptotic protein that modulates a caspase-10 dependent mitochondrial caspase-3/9 feedback amplification loop. The protein is Caspase activity and apoptosis inhibitor 1 (Caap1) of Mus musculus (Mouse).